The primary structure comprises 581 residues: 2-succinyl-5-enolpyruvyl-6-hydroxy-3-cyclohexene-1-carboxylate synthase (581 aa).

Belongs to the TPP enzyme family. MenD subfamily. As to quaternary structure, homodimer. Mg(2+) is required as a cofactor. Mn(2+) serves as cofactor. It depends on thiamine diphosphate as a cofactor.

The enzyme catalyses isochorismate + 2-oxoglutarate + H(+) = 5-enolpyruvoyl-6-hydroxy-2-succinyl-cyclohex-3-ene-1-carboxylate + CO2. It functions in the pathway quinol/quinone metabolism; 1,4-dihydroxy-2-naphthoate biosynthesis; 1,4-dihydroxy-2-naphthoate from chorismate: step 2/7. Its pathway is quinol/quinone metabolism; menaquinone biosynthesis. Functionally, catalyzes the thiamine diphosphate-dependent decarboxylation of 2-oxoglutarate and the subsequent addition of the resulting succinic semialdehyde-thiamine pyrophosphate anion to isochorismate to yield 2-succinyl-5-enolpyruvyl-6-hydroxy-3-cyclohexene-1-carboxylate (SEPHCHC). This Chlorobium phaeobacteroides (strain BS1) protein is 2-succinyl-5-enolpyruvyl-6-hydroxy-3-cyclohexene-1-carboxylate synthase.